The sequence spans 88 residues: Small ribosomal subunit protein uS15 (88 aa).

The disordered stretch occupies residues Met1–Ser23. Polar residues predominate over residues Asn14 to Ser23.

The protein belongs to the universal ribosomal protein uS15 family. Part of the 30S ribosomal subunit. Forms a bridge to the 50S subunit in the 70S ribosome, contacting the 23S rRNA.

One of the primary rRNA binding proteins, it binds directly to 16S rRNA where it helps nucleate assembly of the platform of the 30S subunit by binding and bridging several RNA helices of the 16S rRNA. Functionally, forms an intersubunit bridge (bridge B4) with the 23S rRNA of the 50S subunit in the ribosome. The chain is Small ribosomal subunit protein uS15 from Delftia acidovorans (strain DSM 14801 / SPH-1).